A 63-amino-acid chain; its full sequence is MLDQKLLSLLVCPVTKAPLIYDEPKQELVCVASGLAYPIRDGIPVMLEGEARVLSQEEKESYK.

It belongs to the UPF0434 family.

The protein is UPF0434 protein Sde_1297 of Saccharophagus degradans (strain 2-40 / ATCC 43961 / DSM 17024).